A 431-amino-acid chain; its full sequence is Glutamate-1-semialdehyde 2,1-aminomutase 1 (431 aa).

At lysine 268 the chain carries N6-(pyridoxal phosphate)lysine.

Belongs to the class-III pyridoxal-phosphate-dependent aminotransferase family. HemL subfamily. Homodimer. It depends on pyridoxal 5'-phosphate as a cofactor.

Its subcellular location is the cytoplasm. It carries out the reaction (S)-4-amino-5-oxopentanoate = 5-aminolevulinate. The protein operates within porphyrin-containing compound metabolism; protoporphyrin-IX biosynthesis; 5-aminolevulinate from L-glutamyl-tRNA(Glu): step 2/2. The protein is Glutamate-1-semialdehyde 2,1-aminomutase 1 of Bacillus pumilus (strain SAFR-032).